Reading from the N-terminus, the 69-residue chain is Putative F-box protein At2g33705 (69 aa).

The region spanning 14–59 (GVNLEQIPYDLVLEILLKLSAKSIARFRCVSKLWDSTFRSRYFTEL) is the F-box domain.

The sequence is that of Putative F-box protein At2g33705 from Arabidopsis thaliana (Mouse-ear cress).